The sequence spans 358 residues: Mannonate dehydratase (358 aa).

The protein belongs to the mannonate dehydratase family. Fe(2+) serves as cofactor. Requires Mn(2+) as cofactor.

It catalyses the reaction D-mannonate = 2-dehydro-3-deoxy-D-gluconate + H2O. The protein operates within carbohydrate metabolism; pentose and glucuronate interconversion. Its function is as follows. Catalyzes the dehydration of D-mannonate. The polypeptide is Mannonate dehydratase (Lactococcus lactis subsp. cremoris (strain MG1363)).